We begin with the raw amino-acid sequence, 89 residues long: Small ribosomal subunit protein uS15 (89 aa).

It belongs to the universal ribosomal protein uS15 family. In terms of assembly, part of the 30S ribosomal subunit. Forms a bridge to the 50S subunit in the 70S ribosome, contacting the 23S rRNA.

Its function is as follows. One of the primary rRNA binding proteins, it binds directly to 16S rRNA where it helps nucleate assembly of the platform of the 30S subunit by binding and bridging several RNA helices of the 16S rRNA. Functionally, forms an intersubunit bridge (bridge B4) with the 23S rRNA of the 50S subunit in the ribosome. The protein is Small ribosomal subunit protein uS15 of Chlamydia caviae (strain ATCC VR-813 / DSM 19441 / 03DC25 / GPIC) (Chlamydophila caviae).